We begin with the raw amino-acid sequence, 910 residues long: von Willebrand factor A domain-containing protein DDB_G0292740 (910 aa).

In terms of domain architecture, VIT spans 63-194 (AYQYYNVSSF…SITIHITMIS (132 aa)). The disordered stretch occupies residues 297-318 (IKNNPHSDSDSDSDDEENKKEN). Residues 346-515 (EFIFLIDCSG…DMETEVMKLL (170 aa)) enclose the VWFA domain. Residues 703-719 (QYQQQQQQQQQNFNSGF) are compositionally biased toward low complexity. The interval 703 to 815 (QYQQQQQQQQ…TQSESTPSND (113 aa)) is disordered. Over residues 720-749 (APPPPPMMSSGPPPPPGSSFGAPPPPPPGG) the composition is skewed to pro residues. Over residues 750–802 (AFPTSSISEKKSSSQSSSSYLPPTMSLSRKSSLSPSSPSKNYPSPKLSSPSLS) the composition is skewed to low complexity. The segment covering 803–815 (YGSTQSESTPSND) has biased composition (polar residues).

The sequence is that of von Willebrand factor A domain-containing protein DDB_G0292740 from Dictyostelium discoideum (Social amoeba).